A 696-amino-acid polypeptide reads, in one-letter code: Polyribonucleotide nucleotidyltransferase (696 aa).

Positions 483 and 489 each coordinate Mg(2+). A KH domain is found at 550–609 (PRITTIYVKTDKIRDVIGSGGKNIRGITEATGVTIDIDDTGKINIASTDKAACDMAIKMI). Residues 619–687 (GKLYMGLVKK…KQGKIKLSRK (69 aa)) enclose the S1 motif domain.

The protein belongs to the polyribonucleotide nucleotidyltransferase family. It depends on Mg(2+) as a cofactor.

It localises to the cytoplasm. It catalyses the reaction RNA(n+1) + phosphate = RNA(n) + a ribonucleoside 5'-diphosphate. Its function is as follows. Involved in mRNA degradation. Catalyzes the phosphorolysis of single-stranded polyribonucleotides processively in the 3'- to 5'-direction. This Geotalea daltonii (strain DSM 22248 / JCM 15807 / FRC-32) (Geobacter daltonii) protein is Polyribonucleotide nucleotidyltransferase.